Here is a 601-residue protein sequence, read N- to C-terminus: MEGSDFLLAGVLFLFAAVAAVPLASRLGIGAVLGYLLAGIAIGPWGLGFISDVDEILHFSELGVVFLMFIIGLELNPSKLWQLRRSIFGVGAAQVLLSAALLAGLLMLTDFAWQAAVVGGIGLAMSSTAMALQLMREKGMNRSESGQLGFSVLLFQDLAVIPALALVPLLAGSADEHFDWMKIGMKVLAFVGMLIGGRYLLRPVFRFIAASGVREVFTAATLLLVLGSALFMDALGLSMALGTFIAGVLLAESEYRHELETAIDPFKGLLLGLFFISVGMSLNLGVLYIHLLWVVISVVVLVAVKILVLYLLARLYGVRSSERMQFAGVLSQGGEFAFVLFSTASSQRLFQGDQMALLLVTVTLSMMTTPLLMKLVDKWLSRQFNGPEEEDEKPWVNDDKPQVIVVGFGRFGQVIGRLLMANKMRITVLERDISAVNLMRKYGYKVYYGDATQVDLLRSAGAEAAESIVITCNEPEDTMKLVEICQQHFPHLHILARARGRVEAHELLQAGVTQFSRETFSSALELGRKTLVTLGMHPHQAQRAQLHFRRLDMRMLRELIPMHADTVQISRAREARRELEEIFQREMQQERRQLDGWDEFE.

The next 13 membrane-spanning stretches (helical) occupy residues 4 to 24 (SDFLLAGVLFLFAAVAAVPLA), 29 to 49 (IGAVLGYLLAGIAIGPWGLGF), 55 to 75 (EILHFSELGVVFLMFIIGLEL), 87 to 107 (IFGVGAAQVLLSAALLAGLLM), 115 to 135 (AAVVGGIGLAMSSTAMALQLM), 152 to 172 (VLLFQDLAVIPALALVPLLAG), 177 to 197 (HFDWMKIGMKVLAFVGMLIGG), 207 to 227 (FIAASGVREVFTAATLLLVLG), 230 to 250 (LFMDALGLSMALGTFIAGVLL), 262 to 282 (AIDPFKGLLLGLFFISVGMSL), 284 to 304 (LGVLYIHLLWVVISVVVLVAV), 324 to 344 (MQFAGVLSQGGEFAFVLFSTA), and 356 to 376 (ALLLVTVTLSMMTTPLLMKLV). The region spanning 400 to 519 (KPQVIVVGFG…AGVTQFSRET (120 aa)) is the RCK N-terminal domain.

This sequence belongs to the monovalent cation:proton antiporter 2 (CPA2) transporter (TC 2.A.37) family. KefB subfamily. In terms of assembly, interacts with the regulatory subunit KefG.

Its subcellular location is the cell inner membrane. Functionally, pore-forming subunit of a potassium efflux system that confers protection against electrophiles. Catalyzes K(+)/H(+) antiport. This chain is Glutathione-regulated potassium-efflux system protein KefB, found in Shigella boydii serotype 18 (strain CDC 3083-94 / BS512).